A 78-amino-acid chain; its full sequence is Large ribosomal subunit protein bL28 (78 aa).

The segment at 1-29 (MSAHCQVTGRQPSFGKSVSHSHRRTSRRW) is disordered.

The protein belongs to the bacterial ribosomal protein bL28 family.

In Corynebacterium efficiens (strain DSM 44549 / YS-314 / AJ 12310 / JCM 11189 / NBRC 100395), this protein is Large ribosomal subunit protein bL28.